A 103-amino-acid polypeptide reads, in one-letter code: Small ribosomal subunit protein uS10 (103 aa).

Belongs to the universal ribosomal protein uS10 family. In terms of assembly, part of the 30S ribosomal subunit.

Involved in the binding of tRNA to the ribosomes. This is Small ribosomal subunit protein uS10 from Azotobacter vinelandii (strain DJ / ATCC BAA-1303).